The following is a 59-amino-acid chain: Large ribosomal subunit protein uL30 (59 aa).

This sequence belongs to the universal ribosomal protein uL30 family. In terms of assembly, part of the 50S ribosomal subunit.

The polypeptide is Large ribosomal subunit protein uL30 (Rhodococcus jostii (strain RHA1)).